A 299-amino-acid chain; its full sequence is Nicotinate-nucleotide pyrophosphorylase [carboxylating] (299 aa).

The segment at Leu-8–Pro-12 is important for hexamer formation. Residues Arg-102, Arg-138 to Lys-139, His-160 to Arg-161, Lys-171, Glu-201, Asp-222, Ser-248 to Gly-250, and Gly-270 each bind quinolinate.

The protein belongs to the NadC/ModD family. As to quaternary structure, hexamer formed by 3 homodimers.

The enzyme catalyses nicotinate beta-D-ribonucleotide + CO2 + diphosphate = quinolinate + 5-phospho-alpha-D-ribose 1-diphosphate + 2 H(+). It participates in cofactor biosynthesis; NAD(+) biosynthesis; nicotinate D-ribonucleotide from quinolinate: step 1/1. Involved in the catabolism of quinolinic acid (QA). This is Nicotinate-nucleotide pyrophosphorylase [carboxylating] from Sus scrofa (Pig).